The sequence spans 141 residues: Large ribosomal subunit protein uL11 (141 aa).

This sequence belongs to the universal ribosomal protein uL11 family. In terms of assembly, part of the ribosomal stalk of the 50S ribosomal subunit. Interacts with L10 and the large rRNA to form the base of the stalk. L10 forms an elongated spine to which L12 dimers bind in a sequential fashion forming a multimeric L10(L12)X complex. Post-translationally, one or more lysine residues are methylated.

Functionally, forms part of the ribosomal stalk which helps the ribosome interact with GTP-bound translation factors. In Lactococcus lactis subsp. lactis (strain IL1403) (Streptococcus lactis), this protein is Large ribosomal subunit protein uL11.